Consider the following 405-residue polypeptide: Glucose-1-phosphate adenylyltransferase (405 aa).

Residues glycine 164, 179–180, and serine 197 each bind alpha-D-glucose 1-phosphate; that span reads EK.

Belongs to the bacterial/plant glucose-1-phosphate adenylyltransferase family. In terms of assembly, homotetramer.

The enzyme catalyses alpha-D-glucose 1-phosphate + ATP + H(+) = ADP-alpha-D-glucose + diphosphate. It participates in glycan biosynthesis; glycogen biosynthesis. Involved in the biosynthesis of ADP-glucose, a building block required for the elongation reactions to produce glycogen. Catalyzes the reaction between ATP and alpha-D-glucose 1-phosphate (G1P) to produce pyrophosphate and ADP-Glc. This chain is Glucose-1-phosphate adenylyltransferase, found in Corynebacterium jeikeium (strain K411).